The primary structure comprises 340 residues: Speriolin-like protein (340 aa).

Disordered stretches follow at residues 42–73 (GGGH…RFTS) and 94–135 (APLS…KLSP). At S60 the chain carries Phosphoserine. A compositionally biased stretch (basic and acidic residues) spans 123-133 (PHSHRGTDRKL). At S134 the chain carries Phosphoserine.

It belongs to the speriolin family.

The protein localises to the cytoplasm. This is Speriolin-like protein (SPATC1L) from Homo sapiens (Human).